A 277-amino-acid polypeptide reads, in one-letter code: 3-methyl-2-oxobutanoate hydroxymethyltransferase (277 aa).

Positions 43 and 82 each coordinate Mg(2+). 3-methyl-2-oxobutanoate is bound by residues 43-44, Asp82, and Lys112; that span reads DS. Glu114 is a Mg(2+) binding site. Residue Glu181 is the Proton acceptor of the active site.

Belongs to the PanB family. In terms of assembly, homodecamer; pentamer of dimers. Requires Mg(2+) as cofactor.

It localises to the cytoplasm. It carries out the reaction 3-methyl-2-oxobutanoate + (6R)-5,10-methylene-5,6,7,8-tetrahydrofolate + H2O = 2-dehydropantoate + (6S)-5,6,7,8-tetrahydrofolate. Its pathway is cofactor biosynthesis; (R)-pantothenate biosynthesis; (R)-pantoate from 3-methyl-2-oxobutanoate: step 1/2. In terms of biological role, catalyzes the reversible reaction in which hydroxymethyl group from 5,10-methylenetetrahydrofolate is transferred onto alpha-ketoisovalerate to form ketopantoate. The polypeptide is 3-methyl-2-oxobutanoate hydroxymethyltransferase (Exiguobacterium sp. (strain ATCC BAA-1283 / AT1b)).